The following is a 599-amino-acid chain: Elongation factor 4 (599 aa).

The 183-residue stretch at 5 to 187 (SHIRNFSIIA…RLVHTIPAPV (183 aa)) folds into the tr-type G domain. GTP contacts are provided by residues 17-22 (DHGKST) and 134-137 (NKMD).

This sequence belongs to the TRAFAC class translation factor GTPase superfamily. Classic translation factor GTPase family. LepA subfamily.

Its subcellular location is the cell inner membrane. It carries out the reaction GTP + H2O = GDP + phosphate + H(+). In terms of biological role, required for accurate and efficient protein synthesis under certain stress conditions. May act as a fidelity factor of the translation reaction, by catalyzing a one-codon backward translocation of tRNAs on improperly translocated ribosomes. Back-translocation proceeds from a post-translocation (POST) complex to a pre-translocation (PRE) complex, thus giving elongation factor G a second chance to translocate the tRNAs correctly. Binds to ribosomes in a GTP-dependent manner. This Pseudomonas putida (strain W619) protein is Elongation factor 4.